The chain runs to 446 residues: Tol-Pal system protein TolB (446 aa).

A signal peptide spans 1 to 24; it reads MKRAFLSALSVGLAALFLTGPAQA.

This sequence belongs to the TolB family. As to quaternary structure, the Tol-Pal system is composed of five core proteins: the inner membrane proteins TolA, TolQ and TolR, the periplasmic protein TolB and the outer membrane protein Pal. They form a network linking the inner and outer membranes and the peptidoglycan layer.

It is found in the periplasm. Its function is as follows. Part of the Tol-Pal system, which plays a role in outer membrane invagination during cell division and is important for maintaining outer membrane integrity. The protein is Tol-Pal system protein TolB of Dinoroseobacter shibae (strain DSM 16493 / NCIMB 14021 / DFL 12).